Reading from the N-terminus, the 56-residue chain is Frontoxin I (56 aa).

4 cysteine pairs are disulfide-bonded: Cys-3-Cys-22, Cys-17-Cys-39, Cys-41-Cys-52, and Cys-53-Cys-56.

This sequence belongs to the three-finger toxin family. Short-chain subfamily. Type I alpha-neurotoxin sub-subfamily. Expressed by the venom gland.

It localises to the secreted. Binds to muscle nicotinic acetylcholine receptor (nAChR) and inhibit acetylcholine from binding to the receptor, thereby impairing neuromuscular transmission. This chain is Frontoxin I, found in Micrurus frontalis (Coral snake).